Consider the following 120-residue polypeptide: Ribonuclease P protein component (120 aa).

Belongs to the RnpA family. In terms of assembly, consists of a catalytic RNA component (M1 or rnpB) and a protein subunit.

The catalysed reaction is Endonucleolytic cleavage of RNA, removing 5'-extranucleotides from tRNA precursor.. In terms of biological role, RNaseP catalyzes the removal of the 5'-leader sequence from pre-tRNA to produce the mature 5'-terminus. It can also cleave other RNA substrates such as 4.5S RNA. The protein component plays an auxiliary but essential role in vivo by binding to the 5'-leader sequence and broadening the substrate specificity of the ribozyme. The polypeptide is Ribonuclease P protein component (Desulfotalea psychrophila (strain LSv54 / DSM 12343)).